Consider the following 449-residue polypeptide: F-box/LRR-repeat protein At3g60040 (449 aa).

The region spanning 12 to 64 (RDAISWLPDEVLGKILSLIPTKQAVSTSLLAKKWRTIFRLVDHLELDDSFSLQ) is the F-box domain. LRR repeat units follow at residues 161–188 (LTLG…FIDT), 191–215 (FYDI…SVHH), 216–237 (HDFI…SVDY), 239–263 (CPDD…EYSH), 287–312 (ERKV…HLSP), and 340–365 (KNKR…IVKD).

This is F-box/LRR-repeat protein At3g60040 from Arabidopsis thaliana (Mouse-ear cress).